We begin with the raw amino-acid sequence, 215 residues long: Chaperone protein TorD (215 aa).

It belongs to the TorD/DmsD family. TorD subfamily.

It localises to the cytoplasm. Involved in the biogenesis of TorA. Acts on TorA before the insertion of the molybdenum cofactor and, as a result, probably favors a conformation of the apoenzyme that is competent for acquiring the cofactor. The chain is Chaperone protein TorD from Vibrio parahaemolyticus serotype O3:K6 (strain RIMD 2210633).